The sequence spans 66 residues: Small ribosomal subunit protein bS21 (66 aa).

This sequence belongs to the bacterial ribosomal protein bS21 family.

In Persephonella marina (strain DSM 14350 / EX-H1), this protein is Small ribosomal subunit protein bS21.